The chain runs to 196 residues: Small ribosomal subunit protein uS4c (196 aa).

A disordered region spans residues 15 to 42; the sequence is LGALPGLTRKTPKSGSNQKKKFNSGKKE. The S4 RNA-binding domain maps to 89–150; sequence MRLDNILFRL…NQRSKRLVQN (62 aa).

Belongs to the universal ribosomal protein uS4 family. In terms of assembly, part of the 30S ribosomal subunit. Contacts protein S5. The interaction surface between S4 and S5 is involved in control of translational fidelity.

Its subcellular location is the plastid. The protein localises to the chloroplast. One of the primary rRNA binding proteins, it binds directly to 16S rRNA where it nucleates assembly of the body of the 30S subunit. Functionally, with S5 and S12 plays an important role in translational accuracy. This chain is Small ribosomal subunit protein uS4c (rps4), found in Cenchrus longisetus (Feathertop).